The chain runs to 124 residues: Small ribosomal subunit protein uS12 (124 aa).

Asp89 is subject to 3-methylthioaspartic acid.

The protein belongs to the universal ribosomal protein uS12 family. As to quaternary structure, part of the 30S ribosomal subunit. Contacts proteins S8 and S17. May interact with IF1 in the 30S initiation complex.

With S4 and S5 plays an important role in translational accuracy. Its function is as follows. Interacts with and stabilizes bases of the 16S rRNA that are involved in tRNA selection in the A site and with the mRNA backbone. Located at the interface of the 30S and 50S subunits, it traverses the body of the 30S subunit contacting proteins on the other side and probably holding the rRNA structure together. The combined cluster of proteins S8, S12 and S17 appears to hold together the shoulder and platform of the 30S subunit. This chain is Small ribosomal subunit protein uS12, found in Glaesserella parasuis serovar 5 (strain SH0165) (Haemophilus parasuis).